The primary structure comprises 1276 residues: Sterol regulatory element-binding protein cleavage-activating protein (1276 aa).

The Cytoplasmic segment spans residues 1 to 18 (MTLTERLREKISQAFYNH). The chain crosses the membrane as a helical span at residues 19–39 (GLLCASYPIPIILFTGLCILA). At 40-279 (CCYPLLKLPL…NLVHVHFKEE (240 aa)) the chain is on the lumenal side. The tract at residues 46 to 284 (KLPLPGTGPV…HFKEEIGIAE (239 aa)) is loop-1. A disordered region spans residues 60–81 (PVKDYSPPPVDSDHKQGEPSEQ). Residue Asn263 is glycosylated (N-linked (GlcNAc...) asparagine). A helical transmembrane segment spans residues 280-300 (IGIAELIPLVTTYIILFAYIY). The 159-residue stretch at 284-442 (ELIPLVTTYI…MFFFTTVLSI (159 aa)) folds into the SSD domain. Topologically, residues 301–312 (FSTRKIDMVKSK) are cytoplasmic. Residues 313–333 (WGLALAAVVTVLSSLLMSVGL) form a helical membrane-spanning segment. At 334 to 344 (CTLFGLTPTLN) the chain is on the lumenal side. Residues 345–365 (GGEIFPYLVVVIGLENVLVLT) traverse the membrane as a helical segment. Over 366-401 (KSVVSTPVDLEVKLRIAQGLSSESWSIMKNVATELG) the chain is Cytoplasmic. A helical membrane pass occupies residues 402 to 422 (IILIGYFTLVPAIQEFCLFAV). A topological domain (lumenal) is located at residue Val423. A helical membrane pass occupies residues 424–444 (GLVSDFFLQMFFFTTVLSIDI). Topologically, residues 445 to 518 (RRMELADLNK…FLARTRLAQR (74 aa)) are cytoplasmic. Positions 447–452 (MELADL) match the ER export signal motif. Residues Lys454 and Lys466 each participate in a glycyl lysine isopeptide (Lys-Gly) (interchain with G-Cter in ubiquitin) cross-link. The chain crosses the membrane as a helical span at residues 519 to 539 (LIMAGTVVWIGILVYTDPAGL). Residues 535–710 (DPAGLRTYLA…QAHGDITLYK (176 aa)) are loop-7. At 540–708 (RTYLAAQVTE…GTQAHGDITL (169 aa)) the chain is on the lumenal side. Residues Asn590 and Asn641 are each glycosylated (N-linked (GlcNAc...) asparagine). The chain crosses the membrane as a helical span at residues 709-729 (YKVAALGLAAGIVLVLLLLCL). The Cytoplasmic portion of the chain corresponds to 730–1276 (YRVLCPRNYG…YVPSVLEKLD (547 aa)). The tract at residues 731 to 1276 (RVLCPRNYGQ…YVPSVLEKLD (546 aa)) is interaction with SREBF2. The stretch at 771–811 (VLRGHLMDIECLASDGMLLVSCCLAGQVCVWDAQTGDCLTR) is one WD 1 repeat. Residues 816–903 (GSRRDSCGGG…RHRAGCGRAR (88 aa)) are disordered. 6 positions are modified to phosphoserine: Ser821, Ser837, Ser843, Ser850, Ser905, and Ser934. The disordered stretch occupies residues 928-957 (PALRPPSPGSPLPQASQEDGAAPEKGSPPL). 2 WD repeats span residues 949–999 (APEK…LCCS) and 1002–1039 (EVSS…SLSP). Omega-N-methylarginine is present on Arg1048. 4 WD repeats span residues 1074–1111 (AHQK…CLFT), 1114–1152 (GHSG…RVSH), 1155–1192 (AHRG…KLYS), and 1194–1232 (QQDL…LLQT).

The protein belongs to the WD repeat SCAP family. In terms of assembly, membrane region forms a homotetramer. Component of the SCAP-SREBP complex (composed of SCAP and SREBF1/SREBP1 or SREBF2/SREBP2); interacts with SREBF1/SREBP1 or SREBF2/SREBP2 through its C-terminal cytoplasmic domain. Forms a ternary complex with INSIG1 or INSIG2 through its transmembrane domains at high sterol concentrations. Interacts with PAQR3; the interaction anchors the SCAP-SREBP complex to the Golgi apparatus in low cholesterol conditions. Interacts with the SEC23-SEC24 complex in a SAR1-GTP-dependent manner through an ER export signal in its third cytoplasmic loop. Interacts with RNF139; the interaction inhibits the interaction of SCAP with SEC24B and hampering the ER to Golgi transport of the SCAP-SREBP complex. Interacts with SPRING. Post-translationally, ubiquitinated at Lys-454 and Lys-466. RNF145 triggers ubiquitination of SCAP, likely inhibiting SCAP-SREBP complex transport to the Golgi apparatus and the subsequent processing/maturation of SREBF2/SREBP2.

The protein localises to the endoplasmic reticulum membrane. Its subcellular location is the golgi apparatus membrane. The protein resides in the cytoplasmic vesicle. It is found in the COPII-coated vesicle membrane. Functionally, escort protein required for cholesterol as well as lipid homeostasis. Regulates export of the SCAP-SREBP complex from the endoplasmic reticulum to the Golgi upon low cholesterol, thereby regulating the processing of sterol regulatory element-binding proteins (SREBPs) SREBF1/SREBP1 and SREBF2/SREBP2. At high sterol concentrations, formation of a ternary complex with INSIG (INSIG1 or INSIG2) leads to mask the ER export signal in SCAP, promoting retention of the complex in the endoplasmic reticulum. Low sterol concentrations trigger release of INSIG, a conformational change in the SSD domain of SCAP, unmasking of the ER export signal, promoting recruitment into COPII-coated vesicles and transport of the SCAP-SREBP to the Golgi: in the Golgi, SREBPs are then processed, releasing the transcription factor fragment of SREBPs from the membrane, its import into the nucleus and up-regulation of LDLR, INSIG1 and the mevalonate pathway. Binds cholesterol via its SSD domain. This is Sterol regulatory element-binding protein cleavage-activating protein from Cricetulus griseus (Chinese hamster).